The following is a 420-amino-acid chain: Glutamyl-tRNA reductase (420 aa).

Residues 49-52 (TCNR), S109, 114-116 (EPQ), and Q120 contribute to the substrate site. C50 (nucleophile) is an active-site residue. 189–194 (GAGETI) contributes to the NADP(+) binding site.

It belongs to the glutamyl-tRNA reductase family. As to quaternary structure, homodimer.

It catalyses the reaction (S)-4-amino-5-oxopentanoate + tRNA(Glu) + NADP(+) = L-glutamyl-tRNA(Glu) + NADPH + H(+). It participates in porphyrin-containing compound metabolism; protoporphyrin-IX biosynthesis; 5-aminolevulinate from L-glutamyl-tRNA(Glu): step 1/2. Its function is as follows. Catalyzes the NADPH-dependent reduction of glutamyl-tRNA(Glu) to glutamate 1-semialdehyde (GSA). The sequence is that of Glutamyl-tRNA reductase from Yersinia pseudotuberculosis serotype O:1b (strain IP 31758).